A 971-amino-acid chain; its full sequence is UPF0182 protein CMS1887 (971 aa).

Helical transmembrane passes span 16-36 (LAIT…FAGF), 56-76 (WGAG…PVFV), 108-128 (LAMF…ASSG), 161-181 (FYHA…LGVL), 205-225 (IQIA…IWLD), 255-275 (TILA…AAIG), and 281-301 (IIGT…YPAI). Residues 687 to 702 (QDLWTTPNDPTATTEA) are compositionally biased toward polar residues. Disordered regions lie at residues 687–706 (QDLW…GTPA) and 874–924 (GATA…AQDV). 2 stretches are compositionally biased toward low complexity: residues 884–900 (PTTP…TDGA) and 907–921 (STPT…AAPA).

The protein belongs to the UPF0182 family.

It is found in the cell membrane. The protein is UPF0182 protein CMS1887 of Clavibacter sepedonicus (Clavibacter michiganensis subsp. sepedonicus).